The chain runs to 449 residues: POU domain, class 5, transcription factor 1.1 (449 aa).

Disordered stretches follow at residues 79–125 (ENNQ…SPPN) and 170–233 (YPTP…PSES). Basic and acidic residues predominate over residues 97-110 (SRIKVKEEVVHETD). Residues 170–180 (YPTPANQSPNT) show a composition bias toward polar residues. Positions 187 to 199 (SSMESSRCSSTNS) are enriched in low complexity. Residues 224 to 233 (DNEEEVPSES) are compositionally biased toward acidic residues. In terms of domain architecture, POU-specific spans 227–301 (EEVPSESEME…FLERWVVEAE (75 aa)). Positions 321–380 (KRKRRTNIENIVKGTLESYFMKCPKPGAQEMVQIAKELNMDKDVVRVWFCNRRQKGKRQG) form a DNA-binding region, homeobox.

The protein belongs to the POU transcription factor family. Class-5 subfamily. In terms of assembly, interacts with components of the transcription complex that assembles on the vent2-B gene, including vent2 (via C-terminus), smad1 and smad4. Forms a repression complex on the promoters of the gsc and mix2 genes via interactions with the nodal/activin signaling pathway transducers foxh1/fast1, gtf2ird1/wbscr11 and smad2. Forms a repression complex on the promoters of the nodal/nr1 and siamois genes with the maternal factors tcf7l1/tcf3 and vegt. In terms of tissue distribution, highly enriched within the animal half of developing embryos within ectodermal and mesodermal regions. Expressed in the neuroectoderm at the early neurula stage, with expression initially extending to the future hindbrain/midbrain boundary, but later shifting toward the posterior pole where it persists within the tip of the tail in hatching embryos. Expressed at very low levels in the adult kidney.

It localises to the nucleus. Its function is as follows. Transcription factor that binds to the octamer motif (5'-ATTTGCAT-3'). Activates transcription when directly bound to the octamer DNA sequence, but can form repression complexes with other proteins at the promoter site to inhibit transcription. Binds to the promoter of the vent2-B gene to activate transcription when in the presence of other BMP signaling factors also bound to the promoter. Inhibits the competence of ectodermal cells to respond to BMP during embryogenesis thereby inhibiting epidermal differentiation and promoting neural induction. Antagonizes the activity of nodal/activin signaling by forming a transcriptional repression complex on the gsc and mix2 gene promoters to inhibit their transcription, and thus maintain the undifferentiated state of embryonic cells to prevent them from differentiating prematurely. Acts maternally to inhibit vegt and beta-catenin-activated gene transcription by forming a transcriptional repression complex on the nodal/nr1 and siamois promoters to inhibit their transcription. This chain is POU domain, class 5, transcription factor 1.1 (pou5f1.1), found in Xenopus laevis (African clawed frog).